We begin with the raw amino-acid sequence, 550 residues long: Hydroxylamine reductase (550 aa).

[2Fe-2S] cluster contacts are provided by C3, C6, C18, and C25. Hybrid [4Fe-2O-2S] cluster contacts are provided by H249, E273, C317, C405, C433, C458, E492, and K494. The residue at position 405 (C405) is a Cysteine persulfide.

It belongs to the HCP family. Requires [2Fe-2S] cluster as cofactor. Hybrid [4Fe-2O-2S] cluster is required as a cofactor.

The protein localises to the cytoplasm. It carries out the reaction A + NH4(+) + H2O = hydroxylamine + AH2 + H(+). Its function is as follows. Catalyzes the reduction of hydroxylamine to form NH(3) and H(2)O. This is Hydroxylamine reductase from Salmonella enteritidis PT4 (strain P125109).